A 132-amino-acid chain; its full sequence is Interleukin-13 (132 aa).

The signal sequence occupies residues 1 to 18; that stretch reads MALLLTAVIVLICFGGLT. Asn-38, Asn-49, Asn-57, and Asn-75 each carry an N-linked (GlcNAc...) asparagine glycan. 2 disulfide bridges follow: Cys-48-Cys-76 and Cys-64-Cys-90.

This sequence belongs to the IL-4/IL-13 family. As to quaternary structure, interacts with IL13RA2.

The protein resides in the secreted. Functionally, cytokine that plays important roles in allergic inflammation and immune response to parasite infection. Synergizes with IL2 in regulating interferon-gamma synthesis. Stimulates B-cell proliferation, and activation of eosinophils, basophils, and mast cells. Plays an important role in controlling IL33 activity by modulating the production of transmembrane and soluble forms of interleukin-1 receptor-like 1/IL1RL1. Displays the capacity to antagonize Th1-driven proinflammatory immune response and downregulates synthesis of many proinflammatory cytokines including IL1, IL6, IL10, IL12 and TNF-alpha through a mechanism that partially involves suppression of NF-kappa-B. Also functions on nonhematopoietic cells, including endothelial cells where it induces vascular cell adhesion protein 1/VCAM1, which is important in the recruitment of eosinophils. Exerts its biological effects through its receptors which comprises the IL4R chain and the IL13RA1 chain, to activate JAK1 and TYK2, leading to the activation of STAT6. Aside from IL13RA1, another receptor IL13RA2 acts as a high affinity decoy for IL13 and mediates internalization and depletion of extracellular IL13. This Bos taurus (Bovine) protein is Interleukin-13 (IL13).